We begin with the raw amino-acid sequence, 962 residues long: Glycine dehydrogenase (decarboxylating) (962 aa).

K709 is subject to N6-(pyridoxal phosphate)lysine.

It belongs to the GcvP family. The glycine cleavage system is composed of four proteins: P, T, L and H. It depends on pyridoxal 5'-phosphate as a cofactor.

It catalyses the reaction N(6)-[(R)-lipoyl]-L-lysyl-[glycine-cleavage complex H protein] + glycine + H(+) = N(6)-[(R)-S(8)-aminomethyldihydrolipoyl]-L-lysyl-[glycine-cleavage complex H protein] + CO2. Functionally, the glycine cleavage system catalyzes the degradation of glycine. The P protein binds the alpha-amino group of glycine through its pyridoxal phosphate cofactor; CO(2) is released and the remaining methylamine moiety is then transferred to the lipoamide cofactor of the H protein. This is Glycine dehydrogenase (decarboxylating) from Shewanella sediminis (strain HAW-EB3).